Reading from the N-terminus, the 483-residue chain is Glycogen synthase kinase-3 alpha (483 aa).

Positions Met-1–Gly-15 are enriched in gly residues. Positions Met-1–Asp-96 are disordered. Ser-2 carries the N-acetylserine modification. Phosphoserine is present on Ser-2. The residue at position 21 (Ser-21) is a Phosphoserine; by PKB/AKT1. Positions Pro-25–Ala-82 are enriched in gly residues. 3 positions are modified to phosphoserine: Ser-72, Ser-77, and Ser-97. The Protein kinase domain maps to Tyr-119–Phe-403. Residues Ile-125 to Val-133 and Lys-148 each bind ATP. Asp-244 acts as the Proton acceptor in catalysis. Tyr-279 carries the phosphotyrosine modification. The tract at residues Ala-449–Ser-483 is disordered.

The protein belongs to the protein kinase superfamily. CMGC Ser/Thr protein kinase family. GSK-3 subfamily. As to quaternary structure, monomer. Interacts with ARRB2. Interacts with AXIN1 and CTNNB1/beta-catenin. Interacts with CTNND2. Interacts with LMBR1L. Interacts with DDX3X. Interacts with TNFRSF10B. Interacts with RICTOR; the interaction results in phosphorylation of RICTOR at 'Thr-1695' by GSK3A which facilitates FBXW7-mediated ubiquitination and subsequent degradation of RICTOR. (Microbial infection) Interacts with M.tuberculosis PtpA. In terms of processing, phosphorylated by AKT1 at Ser-21: upon insulin-mediated signaling, the activated PKB/AKT1 protein kinase phosphorylates and deactivates GSK3A, resulting in the dephosphorylation and activation of GYS1. Activated by phosphorylation at Tyr-279. (Microbial infection) Dephosphorylated at Tyr-279 by M.tuberculosis PtpA, which leads to prevention of apoptosis during early stages of microbial infection.

It catalyses the reaction L-seryl-[tau protein] + ATP = O-phospho-L-seryl-[tau protein] + ADP + H(+). It carries out the reaction L-threonyl-[tau protein] + ATP = O-phospho-L-threonyl-[tau protein] + ADP + H(+). The enzyme catalyses L-seryl-[protein] + ATP = O-phospho-L-seryl-[protein] + ADP + H(+). The catalysed reaction is L-threonyl-[protein] + ATP = O-phospho-L-threonyl-[protein] + ADP + H(+). Activated by phosphorylation at Tyr-279. In response to insulin, inhibited by phosphorylation at Ser-21 by PKB/AKT1; phosphorylation at this site causes a conformational change, preventing access of substrates to the active site. Inhibited by lithium. Its function is as follows. Constitutively active protein kinase that acts as a negative regulator in the hormonal control of glucose homeostasis, Wnt signaling and regulation of transcription factors and microtubules, by phosphorylating and inactivating glycogen synthase (GYS1 or GYS2), CTNNB1/beta-catenin, APC and AXIN1. Requires primed phosphorylation of the majority of its substrates. Contributes to insulin regulation of glycogen synthesis by phosphorylating and inhibiting GYS1 activity and hence glycogen synthesis. Regulates glycogen metabolism in liver, but not in muscle. May also mediate the development of insulin resistance by regulating activation of transcription factors. In Wnt signaling, regulates the level and transcriptional activity of nuclear CTNNB1/beta-catenin. Facilitates amyloid precursor protein (APP) processing and the generation of APP-derived amyloid plaques found in Alzheimer disease. May be involved in the regulation of replication in pancreatic beta-cells. Is necessary for the establishment of neuronal polarity and axon outgrowth. Through phosphorylation of the anti-apoptotic protein MCL1, may control cell apoptosis in response to growth factors deprivation. Acts as a regulator of autophagy by mediating phosphorylation of KAT5/TIP60 under starvation conditions which activates KAT5/TIP60 acetyltransferase activity and promotes acetylation of key autophagy regulators, such as ULK1 and RUBCNL/Pacer. Negatively regulates extrinsic apoptotic signaling pathway via death domain receptors. Promotes the formation of an anti-apoptotic complex, made of DDX3X, BRIC2 and GSK3B, at death receptors, including TNFRSF10B. The anti-apoptotic function is most effective with weak apoptotic signals and can be overcome by stronger stimulation. Phosphorylates mTORC2 complex component RICTOR at 'Thr-1695' which facilitates FBXW7-mediated ubiquitination and subsequent degradation of RICTOR. The polypeptide is Glycogen synthase kinase-3 alpha (GSK3A) (Homo sapiens (Human)).